We begin with the raw amino-acid sequence, 162 residues long: ATP synthase subunit b (162 aa).

The chain crosses the membrane as a helical span at residues 8 to 28 (LTGIIQLLNFLILLFVLYKFL).

It belongs to the ATPase B chain family. F-type ATPases have 2 components, F(1) - the catalytic core - and F(0) - the membrane proton channel. F(1) has five subunits: alpha(3), beta(3), gamma(1), delta(1), epsilon(1). F(0) has three main subunits: a(1), b(2) and c(10-14). The alpha and beta chains form an alternating ring which encloses part of the gamma chain. F(1) is attached to F(0) by a central stalk formed by the gamma and epsilon chains, while a peripheral stalk is formed by the delta and b chains.

It localises to the cell inner membrane. Functionally, f(1)F(0) ATP synthase produces ATP from ADP in the presence of a proton or sodium gradient. F-type ATPases consist of two structural domains, F(1) containing the extramembraneous catalytic core and F(0) containing the membrane proton channel, linked together by a central stalk and a peripheral stalk. During catalysis, ATP synthesis in the catalytic domain of F(1) is coupled via a rotary mechanism of the central stalk subunits to proton translocation. Its function is as follows. Component of the F(0) channel, it forms part of the peripheral stalk, linking F(1) to F(0). The sequence is that of ATP synthase subunit b from Pseudothermotoga lettingae (strain ATCC BAA-301 / DSM 14385 / NBRC 107922 / TMO) (Thermotoga lettingae).